The following is a 1751-amino-acid chain: MRIFHFSNKFPPDDLADLFRRLRLHSKCPNHVILARVLEEVTDVVREEIAELPAELRSLLPPFQSILDLAESFNWHQGPLSGTFECVFLVLMPVCLFVGRPDEFVFRRDTSLFTGLGLGFLAATAIVASPSLCSVPVTVAEVVRMAMRTGLLIYQRSQDLEPQSLDGALESWTSIVKGMGEVAVREGIDEYNSSTDTPQPSSIYISVVEPDGSVFINGPPSRLRKFFSTSGKVQSAAHAPLPVYGGPCHAPHLYDHSHSSWAVKKCRAKVLSRDLSHAAYLLSMADGNPLKADTVLELFESATYILLTSIIRWGDVVNAITASSPLLEKDMKLQVEILRPSPVVDGLVSAIQKSHPGCSAYVVDLGEWIFDDTHISPHGAHEKIAVIGMSCRLPGGADDLELLWELLREGRDVHRKVPADRYDVDSHTDITGKQRNTSHTPFGCFVDQPGLFDAGFFDMSPREAGQTDPTHRLALLTAYEALEQSGYVPDRTRSTRRERVGTIYGQCSDDYRECNAGQDIDMYFIPGNYRAFAPGRISYFFKFSGPSFNIDTACSASLAAVQIACSVLSRGEADMVVAGGLNILTGSDSFAGLSKGFFLSKTGNCQVFDDAADGYCRGDGIGSIILKRLSDAQQDNDNILGLILGSATNHSSNAISITHPHAPTQANLYRSTLMQAGVRPQDVDLVEMHGTGTQAGDAAEIESVTKVFSPAVPRRSQPLRISSVKANVGHGEAAAGITALIKALLIFKHNEIPPQVCLRTTLNSKFPDLRQLNVHIPKKIIPWPRLPGRKRYIMVNNFSAAGGNTSLLLEEPPARPDPKGCPQTRFVVTVSAKSTVSLIRNLEGLLGFLKMDPFVDLASLAYTTTARRMHHKYRIVVHGASIQEIVKSLEQHISIAETQCAIQKAPTIGFVFSGQGSFSQGVGRQLFQEYPPYRNEIQRLDEICTSHGFDSILPAITSRSSDILEISPFMAQLVTVCVQIALCRLWRSLGVIPNVVVGASLGEYAALYAAGTLSASDVIYLVGQRARLMQELCTINSHSMLAVKATIGEIRHTVRNNAYEFACINGPRDVTLAASVEDINDIQQTLVSQGYRVAKLNVPFAFHSSQIEPILEPYNKIAHSVIFRNLKTALISPLLSDVVFDNKSFPPSYLRDSTRGTVQFSDAMTKAQEIGLVDSKTVWVEIGVHQTYTGAMRANIPNLEVVAPSLRSDESNWHTLAASMSALHSAGVHLDWNTWYKPFESQLRLLNLPPYQWNLKNHWIQHNGDWLLLKDKRSRTGYERSPAPAPPPLRTALVHHILEESFGKDGGTVVIQSNVTDDEFHAVASGHQMSGRPLVSVFAYTDIALIMARYMYSRLKSGTELSAMDFGKVRVFQGLIPRKDRSKPQYVRMRMQADPMCSSMPLSLHRVLDDEMNEEELAIGVVTCGDSHSWRDEWAAYSYLLTSRIEALHQLADQGLASRVSKDLVYTLFKNVVDYAEHYRGIQSAVMYGLEAVADVILSPSQDSRWTAPPHHIDPITHVGGLILNAGPAMDHTNTIYIMEGWESMRFSDSLMAGELYRSYVKMNPANDNSGFFSGDVYILHGNRVIGRVREMTLRPLPRILMSRFFDPPDSQYGQMAQQEPSTALPSTPQHTSSAKTTESTPSQQDESDNTSLATPENENKAPISGSWPNANSQLVRDAIALIASETGVEPDALTDETEFSAVGVDSLLSLVLVEKFALELNIDLQGSFFLETPNVCDLKAYLEGNQMTLR.

Positions 19-249 (FRRLRLHSKC…PLPVYGGPCH (231 aa)) are N-terminal acylcarrier protein transacylase domain (SAT). One can recognise a Ketosynthase family 3 (KS3) domain in the interval 381–811 (HEKIAVIGMS…GGNTSLLLEE (431 aa)). Residues cysteine 554, histidine 689, and histidine 730 each act as for beta-ketoacyl synthase activity in the active site. Positions 910–1228 (FVFSGQGSFS…SMSALHSAGV (319 aa)) are malonyl-CoA:ACP transacylase (MAT) domain. The tract at residues 1291–1607 (TALVHHILEE…PRILMSRFFD (317 aa)) is product template (PT) domain. The N-terminal hotdog fold stretch occupies residues 1295-1429 (HHILEESFGK…GVVTCGDSHS (135 aa)). The PKS/mFAS DH domain occupies 1295–1603 (HHILEESFGK…LRPLPRILMS (309 aa)). Histidine 1327 serves as the catalytic Proton acceptor; for dehydratase activity. Positions 1456 to 1603 (LASRVSKDLV…LRPLPRILMS (148 aa)) are C-terminal hotdog fold. The active-site Proton donor; for dehydratase activity is aspartate 1514. Residues 1610–1670 (DSQYGQMAQQ…KAPISGSWPN (61 aa)) form a disordered region. The span at 1612 to 1657 (QYGQMAQQEPSTALPSTPQHTSSAKTTESTPSQQDESDNTSLATPE) shows a compositional bias: polar residues. The Carrier domain occupies 1670–1747 (NANSQLVRDA…DLKAYLEGNQ (78 aa)). Position 1707 is an O-(pantetheine 4'-phosphoryl)serine (serine 1707).

Pantetheine 4'-phosphate serves as cofactor. Expressed mainly in sclerotia, with expression levels 20-fold and 10-fold greater than the expression levels of this gene found in mycelium and conidia, respectively.

It participates in secondary metabolite biosynthesis. In terms of biological role, non-reducing polyketide synthase (NRPKS); part of the gene cluster that mediates the biosynthesis of aflavarin, a bicoumarin that exhibits anti-insectan activity against the fungivorous beetle C.hemipterus. Catalyzes the formation of the aromatic polyketide from acetyl coenzyme A and seven malonyl coenzyme A molecules. This Aspergillus flavus (strain ATCC 200026 / FGSC A1120 / IAM 13836 / NRRL 3357 / JCM 12722 / SRRC 167) protein is Non-reducing polyketide synthase afvB.